Consider the following 200-residue polypeptide: Probable GTP-binding protein EngB (200 aa).

Positions 22–199 (NVAEVAFLGR…QDKITGYLFG (178 aa)) constitute an EngB-type G domain. GTP is bound by residues 30–37 (GRSNVGKS), 57–61 (GKTQL), 85–88 (DLPG), 155–158 (TKID), and 177–180 (FLSN). Mg(2+) is bound by residues S37 and T59.

It belongs to the TRAFAC class TrmE-Era-EngA-EngB-Septin-like GTPase superfamily. EngB GTPase family. Mg(2+) is required as a cofactor.

In terms of biological role, necessary for normal cell division and for the maintenance of normal septation. This chain is Probable GTP-binding protein EngB, found in Aliarcobacter butzleri (strain RM4018) (Arcobacter butzleri).